Reading from the N-terminus, the 258-residue chain is Type III pantothenate kinase (258 aa).

Residue 7–14 participates in ATP binding; that stretch reads DVGNTRLK. Residues Tyr96 and 103–106 contribute to the substrate site; that span reads GADR. The active-site Proton acceptor is the Asp105. Thr133 serves as a coordination point for ATP. Thr183 provides a ligand contact to substrate.

It belongs to the type III pantothenate kinase family. In terms of assembly, homodimer. Requires NH4(+) as cofactor. K(+) serves as cofactor.

It localises to the cytoplasm. The enzyme catalyses (R)-pantothenate + ATP = (R)-4'-phosphopantothenate + ADP + H(+). The protein operates within cofactor biosynthesis; coenzyme A biosynthesis; CoA from (R)-pantothenate: step 1/5. In terms of biological role, catalyzes the phosphorylation of pantothenate (Pan), the first step in CoA biosynthesis. The polypeptide is Type III pantothenate kinase (Acidovorax ebreus (strain TPSY) (Diaphorobacter sp. (strain TPSY))).